Reading from the N-terminus, the 600-residue chain is E3 ubiquitin-protein ligase RLIM (600 aa).

Met-1 is modified (N-acetylmethionine). Positions Met-1–Ser-11 are enriched in basic and acidic residues. 3 disordered regions span residues Met-1–Arg-24, Asn-49–Gly-355, and Ser-417–Asp-497. Polar residues-rich tracts occupy residues Ser-103–Ser-131 and Ile-140–Glu-152. Ser-163 bears the Phosphoserine mark. A compositionally biased stretch (polar residues) spans Asn-166–Met-175. Residues Glu-176–Pro-187 are compositionally biased toward low complexity. Ser-194, Ser-227, and Ser-229 each carry phosphoserine. Positions Arg-213–Arg-228 are enriched in basic and acidic residues. A compositionally biased stretch (polar residues) spans Leu-244–Ser-255. The residue at position 269 (Ser-269) is a Phosphoserine. A compositionally biased stretch (low complexity) spans Ser-288 to Gly-306. Residues Arg-322–Ile-332 are compositionally biased toward basic and acidic residues. Over residues Ala-333 to Tyr-349 the composition is skewed to polar residues. The segment covering Ser-448 to Ser-475 has biased composition (low complexity). Residues Cys-546–Arg-587 form an RING-type zinc finger. Positions Glu-597–Val-600 match the PDZ-binding motif.

This sequence belongs to the RNF12 family. Interacts (via N-terminus) with TERF1. Interacts (via C-terminus) with ESR1. Interacts with LIM/homeobox factors such as LHX3. Interacts with LDB1, LDB2 and SIN3A. Interacts with LIMK1.

The protein resides in the nucleus. The enzyme catalyses S-ubiquitinyl-[E2 ubiquitin-conjugating enzyme]-L-cysteine + [acceptor protein]-L-lysine = [E2 ubiquitin-conjugating enzyme]-L-cysteine + N(6)-ubiquitinyl-[acceptor protein]-L-lysine.. The protein operates within protein modification; protein ubiquitination. Functionally, E3 ubiquitin-protein ligase that acts as a negative coregulator for LIM homeodomain transcription factors by mediating the ubiquitination and subsequent degradation of LIM cofactors LDB1 and LDB2 and by mediating the recruitment the SIN3a/histone deacetylase corepressor complex. Ubiquitination and degradation of LIM cofactors LDB1 and LDB2 allows DNA-bound LIM homeodomain transcription factors to interact with other protein partners such as RLIM. Plays a role in telomere length-mediated growth suppression by mediating the ubiquitination and degradation of TERF1. By targeting ZFP42 for degradation, acts as an activator of random inactivation of X chromosome in the embryo, a stochastic process in which one X chromosome is inactivated to minimize sex-related dosage differences of X-encoded genes in somatic cells of female placental mammals. The chain is E3 ubiquitin-protein ligase RLIM (Rlim) from Mus musculus (Mouse).